Reading from the N-terminus, the 128-residue chain is NADPH-dependent 7-cyano-7-deazaguanine reductase (128 aa).

Cysteine 34 (thioimide intermediate) is an active-site residue. Aspartate 41 (proton donor) is an active-site residue. Residues 56–58 and 75–76 each bind substrate; these read IEL and HE.

This sequence belongs to the GTP cyclohydrolase I family. QueF type 1 subfamily.

Its subcellular location is the cytoplasm. The enzyme catalyses 7-aminomethyl-7-carbaguanine + 2 NADP(+) = 7-cyano-7-deazaguanine + 2 NADPH + 3 H(+). The protein operates within tRNA modification; tRNA-queuosine biosynthesis. In terms of biological role, catalyzes the NADPH-dependent reduction of 7-cyano-7-deazaguanine (preQ0) to 7-aminomethyl-7-deazaguanine (preQ1). This chain is NADPH-dependent 7-cyano-7-deazaguanine reductase, found in Ruthia magnifica subsp. Calyptogena magnifica.